The sequence spans 553 residues: Zinc finger CCHC domain-containing protein 8 homolog (553 aa).

Phosphoserine is present on S59. The CCHC-type zinc finger occupies 183–200; the sequence is SSCFNCGDTEHSLRDCTK. S292 and S347 each carry phosphoserine. Y356 is subject to Phosphotyrosine. The interval 388–492 is disordered; it reads LEEETEDPPL…APSTPFKASY (105 aa). Residues 395-409 are compositionally biased toward pro residues; that stretch reads PPLPPSVPPPQPPPP. S421 and S423 each carry phosphoserine. Composition is skewed to polar residues over residues 444–456 and 473–485; these read ASHN…SKSP and ESGN…SAPS.

It belongs to the ZCCHC8 family.

Its subcellular location is the nucleus. The protein resides in the nucleoplasm. Functionally, scaffolding subunit of the trimeric nuclear exosome targeting (NEXT) complex, a complex that directs a subset of non-coding short-lived RNAs for exosomal degradation. The RNA exosome is fundamental for the degradation of RNA in eukaryotic nuclei. May be involved in pre-mRNA splicing. In Drosophila melanogaster (Fruit fly), this protein is Zinc finger CCHC domain-containing protein 8 homolog.